Here is an 863-residue protein sequence, read N- to C-terminus: Chromatin assembly factor 1 subunit A (863 aa).

Disordered regions lie at residues 1–353, 423–466, 513–579, and 749–863; these read MVVV…EEKD, LNGL…PDRS, DSDE…RQRM, and VTRD…PATA. Residues 42 to 54 are compositionally biased toward basic and acidic residues; that stretch reads LNPEPKECNEPKR. Thr111 is modified (phosphothreonine). Ser118 bears the Phosphoserine mark. Over residues 144-154 the composition is skewed to low complexity; that stretch reads SEGTTEPTIPL. Composition is skewed to acidic residues over residues 155–168 and 177–196; these read TEEETEKDEAEDVD and QDSDTEEEEEEEEEEEEQQQ. Low complexity predominate over residues 205–237; it reads ESVLSTGSTSSASVIASSPEPSKSAPTTPASTS. 2 stretches are compositionally biased toward basic and acidic residues: residues 254 to 353 and 457 to 466; these read QEQE…EEKD and QKADDGPDRS. 2 stretches are compositionally biased toward acidic residues: residues 513-524 and 532-547; these read DSDEEWEEEEPG and GDDDDEAGEDDDDDDG. Over residues 569–579 the composition is skewed to basic and acidic residues; it reads DPEKQKVRQRM. Positions 760-771 are enriched in low complexity; that stretch reads NSPTTNSSTTPS. Residues 806-815 are compositionally biased toward acidic residues; the sequence is DTEDDEDDDC. Polar residues predominate over residues 821-835; that stretch reads QSGSSEQDINTSLPQ. A compositionally biased stretch (low complexity) spans 850–863; it reads TAALALPCPTPATA.

The protein belongs to the CHAF1A family.

It localises to the nucleus. In terms of biological role, acts as a component of the histone chaperone complex chromatin assembly factor 1 (CAF-1), which assembles histone octamers onto DNA during replication and repair. CAF-1 performs the first step of the nucleosome assembly process, bringing newly synthesized histones H3 and H4 to replicating DNA; histones H2A/H2B can bind to this chromatin precursor subsequent to DNA replication to complete the histone octamer. The protein is Chromatin assembly factor 1 subunit A (chaf1a) of Danio rerio (Zebrafish).